We begin with the raw amino-acid sequence, 319 residues long: Methionyl-tRNA formyltransferase (319 aa).

113–116 (SLLP) serves as a coordination point for (6S)-5,6,7,8-tetrahydrofolate.

This sequence belongs to the Fmt family.

The catalysed reaction is L-methionyl-tRNA(fMet) + (6R)-10-formyltetrahydrofolate = N-formyl-L-methionyl-tRNA(fMet) + (6S)-5,6,7,8-tetrahydrofolate + H(+). Attaches a formyl group to the free amino group of methionyl-tRNA(fMet). The formyl group appears to play a dual role in the initiator identity of N-formylmethionyl-tRNA by promoting its recognition by IF2 and preventing the misappropriation of this tRNA by the elongation apparatus. In Pseudomonas fluorescens (strain Pf0-1), this protein is Methionyl-tRNA formyltransferase.